The chain runs to 300 residues: Ribosomal protein L11 methyltransferase (300 aa).

T144, G165, D187, and N235 together coordinate S-adenosyl-L-methionine.

This sequence belongs to the methyltransferase superfamily. PrmA family.

It localises to the cytoplasm. The enzyme catalyses L-lysyl-[protein] + 3 S-adenosyl-L-methionine = N(6),N(6),N(6)-trimethyl-L-lysyl-[protein] + 3 S-adenosyl-L-homocysteine + 3 H(+). Functionally, methylates ribosomal protein L11. The polypeptide is Ribosomal protein L11 methyltransferase (Prochlorococcus marinus (strain MIT 9515)).